The sequence spans 166 residues: Transcription antitermination protein NusB (166 aa).

Over residues 1 to 18 (MISDESDRFNPRDPKPAD) the composition is skewed to basic and acidic residues. The segment at 1–30 (MISDESDRFNPRDPKPADAGKPSKSAKRRE) is disordered.

It belongs to the NusB family.

Involved in transcription antitermination. Required for transcription of ribosomal RNA (rRNA) genes. Binds specifically to the boxA antiterminator sequence of the ribosomal RNA (rrn) operons. The polypeptide is Transcription antitermination protein NusB (Pseudomonas entomophila (strain L48)).